Consider the following 431-residue polypeptide: E3 ubiquitin-protein ligase marc-3 (431 aa).

An RING-CH-type zinc finger spans residues 5–74; sequence NASLGPAVCR…EICKFAFKIK (70 aa). Residues Cys13, Cys16, Cys38, Cys40, His48, Cys51, Cys64, and Cys67 each contribute to the Zn(2+) site. 2 helical membrane-spanning segments follow: residues 98–118 and 157–177; these read PFIDFAFVLLILPFAFFGVFM and LFLFVALLLFSAFITLVVSAL. 2 disordered regions span residues 267 to 289 and 327 to 349; these read TSPDSNNTHHHDESRNEIPFGRR and SRATSTRRESGISPESSSRRDMR. Residues 273–282 show a composition bias toward basic and acidic residues; it reads NTHHHDESRN.

It localises to the cell membrane. The protein resides in the endosome membrane. It carries out the reaction S-ubiquitinyl-[E2 ubiquitin-conjugating enzyme]-L-cysteine + [acceptor protein]-L-lysine = [E2 ubiquitin-conjugating enzyme]-L-cysteine + N(6)-ubiquitinyl-[acceptor protein]-L-lysine.. It functions in the pathway protein modification; protein ubiquitination. Functionally, E3 ubiquitin-protein ligase which positively regulates the fast polyspermy block during fertilization, preventing entry of more than one sperm into the oocyte. After fertilization, required in the zygote for the selective degradation of a subset of maternal membrane proteins including cav-1, chs-1 and rme-2, probably by mediating their K63-linked polyubiquitination. This Caenorhabditis elegans protein is E3 ubiquitin-protein ligase marc-3.